The sequence spans 511 residues: Probable Xaa-Pro aminopeptidase MAA_08947 (511 aa).

Residues D275, D286, E439, and E480 each coordinate Mn(2+).

This sequence belongs to the peptidase M24B family. Mn(2+) is required as a cofactor.

It carries out the reaction Release of any N-terminal amino acid, including proline, that is linked to proline, even from a dipeptide or tripeptide.. Functionally, catalyzes the removal of a penultimate prolyl residue from the N-termini of peptides. The chain is Probable Xaa-Pro aminopeptidase MAA_08947 from Metarhizium robertsii (strain ARSEF 23 / ATCC MYA-3075) (Metarhizium anisopliae (strain ARSEF 23)).